The primary structure comprises 296 residues: GDGENGNGNGNGNGNGNGNGNGNGNGNGNGNGNGNGNGNGNGNGNGNGNGNGNGNGNGNGNGNGNGNGNGNGNGNGNGYFDDDDWDDFDWDDDDWNDNGNGDNGDDDDFWDDWDDDRFDDDRFDDDRFDDDRFDDDRWDDDDNDDWDDDDRWGDDDNDDWDDDDRWGDDDNDDWDDDDRWGDDDNDDWDDDDRWGDDNGNGNGNGNGNGNGDDDDDNGGYAFLRRALARASARARAAASAAGRSRGGSGGSGGSGGSGGSARARARARARAFASARASSGNGVNGGNGKKRSYTSY.

Residues Gly1 to Asn77 are compositionally biased toward gly residues. 2 disordered regions span residues Gly1–Gly219 and Arg233–Tyr296. Composition is skewed to acidic residues over residues Phe80–Asn96 and Asn103–Trp194. Residues Asn198–Asn210 show a composition bias toward gly residues. Residues Arg233–Arg243 show a composition bias toward low complexity. Positions Ser244–Gly259 are enriched in gly residues. The segment covering Arg270 to Asn281 has biased composition (low complexity).

Component of the acid-soluble and acid-insoluble organic matrix of calcified shell layers (at protein level).

The protein resides in the secreted. The polypeptide is Aspartate and glycine-rich protein (Haliotis asinina (Donkey's ear abalone)).